The primary structure comprises 482 residues: Solute carrier family 49 member A3 (482 aa).

12 consecutive transmembrane segments (helical) span residues 41–61 (WFVL…WISF), 81–101 (YLSL…SWLI), 109–129 (AIVF…GAIV), 150–170 (LCAI…SVWF), 181–201 (IASM…PSVV), 206–226 (YIAH…ILAT), 264–284 (VILM…SSFL), 296–316 (LFAG…AFVC), 330–350 (VKTC…VINF), 355–375 (VLVA…SPVG), 390–410 (SSTG…MILF), and 437–457 (TSML…IIFF).

It belongs to the major facilitator superfamily.

It localises to the membrane. The polypeptide is Solute carrier family 49 member A3 (slc49a3) (Xenopus tropicalis (Western clawed frog)).